A 339-amino-acid polypeptide reads, in one-letter code: Glycerol-3-phosphate dehydrogenase [NAD(P)+] (339 aa).

Residues Ser-11, Trp-12, and Lys-109 each coordinate NADPH. 3 residues coordinate sn-glycerol 3-phosphate: Lys-109, Gly-140, and Ser-142. Ala-144 is an NADPH binding site. Residues Lys-195, Asp-249, Ser-259, Arg-260, and Asn-261 each coordinate sn-glycerol 3-phosphate. Residue Lys-195 is the Proton acceptor of the active site. Residue Arg-260 participates in NADPH binding. Val-284 and Glu-286 together coordinate NADPH.

Belongs to the NAD-dependent glycerol-3-phosphate dehydrogenase family.

The protein localises to the cytoplasm. The catalysed reaction is sn-glycerol 3-phosphate + NAD(+) = dihydroxyacetone phosphate + NADH + H(+). The enzyme catalyses sn-glycerol 3-phosphate + NADP(+) = dihydroxyacetone phosphate + NADPH + H(+). It participates in membrane lipid metabolism; glycerophospholipid metabolism. Catalyzes the reduction of the glycolytic intermediate dihydroxyacetone phosphate (DHAP) to sn-glycerol 3-phosphate (G3P), the key precursor for phospholipid synthesis. This chain is Glycerol-3-phosphate dehydrogenase [NAD(P)+], found in Lactobacillus helveticus (strain DPC 4571).